Here is a 182-residue protein sequence, read N- to C-terminus: Prorelaxin (182 aa).

The first 25 residues, 1–25 (MRRLFLSHVLGAWLLLSQLPRELSG), serve as a signal peptide directing secretion. Glutamine 26 is modified (pyrrolidone carboxylic acid). 3 disulfide bridges follow: cysteine 35–cysteine 169, cysteine 47–cysteine 182, and cysteine 168–cysteine 173. The propeptide at 54 to 156 (KTVLRLEEPG…LKNLGLDKHS (103 aa)) is connecting peptide. A propeptide spanning residues 161–162 (MI) is cleaved from the precursor. At glutamine 163 the chain carries Pyrrolidone carboxylic acid.

It belongs to the insulin family. As to quaternary structure, heterodimer of a B chain and an A chain linked by two disulfide bonds.

It is found in the secreted. In terms of biological role, relaxin is an ovarian hormone that acts with estrogen to produce dilatation of the birth canal in many mammals. This is Prorelaxin (RLN) from Equus caballus (Horse).